Here is a 1736-residue protein sequence, read N- to C-terminus: MIYLKILEKLNQAIWLFDINKRVLIWGNQSCKKYKNIESITSLFNNSNLINDIRNGKSKHEHIDIIESNENGEILKQMIFKYSSIHISDMDARQLYLDTSINLLVNQDSHYLDYEGKRIFILVEAIEEIKFIQSPLSSSIENHNINNNQNNQNSVNINSSNKGQYNRPEPSNMGSWEWNVQNDTTKASNQFYKIIGIENDFNKKLNFNDFINKLGIQEIQPIINNCIESNSSSFEYPLRINRKNDNLVRYIQLKGEIIKKDDKVFKVLGVCHDFSEIQEAKDKLEEESKFVEALIGCLKAGIVACNSNGDLTHFNKSAQDLHGLELNDKTDRKQLLDQILKCYRSPYEQINLEKSGTPIIRALSGEFINDQEIIITPTSNQQQSSLSKSNRPRSQSNCSNGNKSQNRLSKNYSTTTTTTNNNNNNNNNNNNNNNNNNNNNSISQQQQTQVSTQQTQQQQNTTNGIGGATTSTTAAAATITSPQQIPIATKIPTKINDNEFLVLASGQEIVSKDGKTIGAFVALHDITERKRNEVILKNATEEAQRANQLKGEFLANISHELLSPMNSIIGMVGLCLDVAPRNLKEMLNDVVESSKILLDLLHQILDFTTLESNSLAVRPFPFKLRDTFNQLFKVFYTRIIEKKISLTFSIDPNIADDFYGDQNRLKQILSNLIDNAIKFSNSSNINNSISIIVEQLTHNQFKKYKDSFRSNSKTHSRLNSHDDYSIDGDYDDQDNNDSYFGRDINVSDNESAVGGFSELDEKDNSDDDDENDDENDETDENDDDTDDDTSSNTSRNNISNNLLFHNNTSGGGGGGINKREKFKKKDREGFVNLKFSIKDRGIGVPEDKHDFIFDRFFQVDGSYSRVQGGVGLGLSICKKLIEFFGGAIWFESEASQGSTFHFILSIKSVEAPSPKSPSLQSSNGSINSTTKLFESSRLKNEIYIPSLPNVQTKKVKKDSNDNGNNDSTNYGISLSNSMNNININGSTLNNNNSINNNNNSNDNGPLTSRTPSNSYYNFIASLNNTSLKSSSHNTLSSSPTGFNGISNLNISGLNNLSNLSNNPNNLNNIIGNTNGNNNTNGNNNSGISLNNSNNNIQTPNGLNNSRGSSLISTPSTKNVKKQHSCPMDLIQRIHSICTPRGPISKECGLNNLPAYSPPKSPGRSLSHGGKNYSNLISTPRGGVGYSSPPINSSSSSGGGSSTNGSNSGNSSANNSTPSSSSLSSTPLTSSNTPSPVSISSNNVNNNNQQQQTQPILSPILPLKDNSIDISDLNNINSLTPNSSNSTSTNVTQSSSNIINNGNSITIINNNPVTPNGKKIVIVPLLSLQSASSPKQSQRGYSPKQQYSPKQYSPKQQYSPKQYSPKQQQQQQQQQQQLEQLSGRMSPHKSNLSSTNLHHIHHHHIHQQQSQQHNNTTVHSNNLILNNNNNNNNNNNNNNNNNNNNNNNNNNNNNNTTNTSNNHTSDPSKSSNSTPETSPPISSPRSNNNNNCSLTTIVGVTTPPQPSSTITTPQFQSPPILSGNSGNINLLSSNGTSSGGIEISGSQMIPQKVLVAEDNTMNQKLIKTLLTKRGFDITIAKDGKQALDFYHESKNKSILYDCILMDIQMPILSGLEATCAIREIEANEGGHIPIIAVTAHAMKGDKEKFLESGVDDYVTKPINPKLLYEVINTQICKYIEENRSSSTINENKNTINNNNNNTNNNNNNNNSSNPVNNNNSNSIDATQQELNNEKIRI.

Positions 143–161 (HNINNNQNNQNSVNINSSN) are enriched in low complexity. The disordered stretch occupies residues 143–171 (HNINNNQNNQNSVNINSSNKGQYNRPEPS). The 53-residue stretch at 234–286 (FEYPLRINRKNDNLVRYIQLKGEIIKKDDKVFKVLGVCHDFSEIQEAKDKLEE) folds into the PAC domain. Positions 287 to 358 (ESKFVEALIG…QINLEKSGTP (72 aa)) constitute a PAS domain. A disordered region spans residues 378–469 (TSNQQQSSLS…NTTNGIGGAT (92 aa)). The span at 379–389 (SNQQQSSLSKS) shows a compositional bias: low complexity. A compositionally biased stretch (polar residues) spans 392–412 (PRSQSNCSNGNKSQNRLSKNY). The span at 413-469 (STTTTTTNNNNNNNNNNNNNNNNNNNNNSISQQQQTQVSTQQTQQQQNTTNGIGGAT) shows a compositional bias: low complexity. The Histidine kinase domain maps to 556 to 908 (NISHELLSPM…TFHFILSIKS (353 aa)). Position 559 is a phosphohistidine; by autocatalysis (H559). 7 disordered regions span residues 711-821 (NSKT…KREK), 952-971 (TKKVKKDSNDNGNNDSTNYG), 1080-1124 (NGNN…KQHS), 1157-1258 (PPKS…ILSP), 1277-1301 (SLTPNSSNSTSTNVTQSSSNIINNG), 1330-1393 (ASSP…NLSS), and 1419-1520 (SNNL…PPIL). 2 stretches are compositionally biased toward acidic residues: residues 725-735 (SIDGDYDDQDN) and 758-789 (ELDEKDNSDDDDENDDENDETDENDDDTDDDT). 3 stretches are compositionally biased toward low complexity: residues 790–807 (SSNTSRNNISNNLLFHNN), 961–971 (DNGNNDSTNYG), and 1080–1096 (NGNNNSGISLNNSNNNI). Over residues 1097–1117 (QTPNGLNNSRGSSLISTPSTK) the composition is skewed to polar residues. Low complexity-rich tracts occupy residues 1186 to 1195 (SSPPINSSSS) and 1202 to 1258 (TNGS…ILSP). Positions 1330 to 1339 (ASSPKQSQRG) are enriched in polar residues. Composition is skewed to low complexity over residues 1340–1376 (YSPKQQYSPKQYSPKQQYSPKQYSPKQQQQQQQQQQQ), 1425–1475 (NNNN…STPE), 1482–1492 (SPRSNNNNNCS), and 1506–1520 (SSTITTPQFQSPPIL). The region spanning 1551–1674 (KVLVAEDNTM…LLYEVINTQI (124 aa)) is the Response regulatory domain. D1605 is modified (4-aspartylphosphate). Over residues 1695-1722 (NNNNNNTNNNNNNNNSSNPVNNNNSNSI) the composition is skewed to low complexity. Residues 1695–1736 (NNNNNNTNNNNNNNNSSNPVNNNNSNSIDATQQELNNEKIRI) form a disordered region.

Post-translationally, activation probably requires transfer of a phosphate group between a histidine in the kinase core (transmitter) domain and an aspartate of the receiver domain.

It carries out the reaction ATP + protein L-histidine = ADP + protein N-phospho-L-histidine.. Acts as a receptor histidine kinase for a signal transduction pathway. This protein undergoes an ATP-dependent autophosphorylation at a conserved histidine residue in the kinase core, and a phosphoryl group is then transferred to a conserved aspartate residue in the receiver domain. The chain is Hybrid signal transduction histidine kinase I (dhkI-1) from Dictyostelium discoideum (Social amoeba).